The primary structure comprises 62 residues: Short neurotoxin 3 (62 aa).

4 cysteine pairs are disulfide-bonded: Cys3/Cys24, Cys17/Cys41, Cys43/Cys54, and Cys55/Cys60.

Belongs to the three-finger toxin family. Short-chain subfamily. Type I alpha-neurotoxin sub-subfamily. Expressed by the venom gland.

The protein resides in the secreted. Binds to muscle nicotinic acetylcholine receptor (nAChR) and inhibit acetylcholine from binding to the receptor, thereby impairing neuromuscular transmission. This is Short neurotoxin 3 from Naja mossambica (Mozambique spitting cobra).